Reading from the N-terminus, the 357-residue chain is Alanine racemase (357 aa).

Lys35 serves as the catalytic Proton acceptor; specific for D-alanine. N6-(pyridoxal phosphate)lysine is present on Lys35. Residue Arg128 participates in substrate binding. Tyr254 serves as the catalytic Proton acceptor; specific for L-alanine. Met302 serves as a coordination point for substrate.

This sequence belongs to the alanine racemase family. It depends on pyridoxal 5'-phosphate as a cofactor.

It carries out the reaction L-alanine = D-alanine. The protein operates within amino-acid biosynthesis; D-alanine biosynthesis; D-alanine from L-alanine: step 1/1. Catalyzes the interconversion of L-alanine and D-alanine. May also act on other amino acids. The protein is Alanine racemase (alr) of Marinobacter nauticus (strain ATCC 700491 / DSM 11845 / VT8) (Marinobacter aquaeolei).